The following is a 1077-amino-acid chain: Teashirt homolog 1 (1077 aa).

Disordered stretches follow at residues 1 to 109 (MPRR…VSYP), 139 to 195 (SGST…SSSS), and 269 to 298 (GHYR…MEME). A compositionally biased stretch (acidic residues) spans 26–36 (IDEEHVEDDGL). Composition is skewed to polar residues over residues 57–71 (QSYQ…TNQD) and 139–152 (SGST…SQKE). Over residues 164-195 (PVSTTGPTTSTPSTSCSSSTSHSSTTSTSSSS) the composition is skewed to low complexity. 2 consecutive C2H2-type zinc fingers follow at residues 246-270 (FRCK…ETGH) and 307-331 (LKCM…KTKH). Residues 269–284 (GHYRDDNRDKDSEKTK) are compositionally biased toward basic and acidic residues. The C2H2-type 3; atypical zinc finger occupies 416 to 440 (LKCMECGSSHDTLQQLTAHMMVTGH). Disordered stretches follow at residues 467-549 (SIPL…KGGL) and 647-720 (TGKV…EPLK). Basic and acidic residues-rich tracts occupy residues 496–528 (SEEK…EKFE), 647–665 (TGKV…EKSS), and 675–708 (KENK…EGPL). Ser-765 is modified (phosphoserine). The disordered stretch occupies residues 848-873 (TGRLTPKSSTPSTVSEKSDADGSSFE). The span at 853–862 (PKSSTPSTVS) shows a compositional bias: polar residues. The segment at residues 885–955 (RKGRQSNWNP…NVKYQLRRTG (71 aa)) is a DNA-binding region (homeobox; atypical). 2 consecutive C2H2-type zinc fingers follow at residues 970–992 (FFCN…LETH) and 1037–1060 (FQCK…SKTH).

The protein belongs to the teashirt C2H2-type zinc-finger protein family. Interacts (via homeobox domain) with APBB1 (via PID domain 1). In terms of tissue distribution, expressed in brain; strongly reduced in post-mortem elderly subjects with Alzheimer disease.

Its subcellular location is the nucleus. Its function is as follows. Probable transcriptional regulator involved in developmental processes. May act as a transcriptional repressor (Potential). In Homo sapiens (Human), this protein is Teashirt homolog 1 (TSHZ1).